We begin with the raw amino-acid sequence, 233 residues long: Small ribosomal subunit protein uS3 (233 aa).

Residues 39–107 enclose the KH type-2 domain; sequence VRQYLKKELA…PAQINISEVR (69 aa).

The protein belongs to the universal ribosomal protein uS3 family. As to quaternary structure, part of the 30S ribosomal subunit. Forms a tight complex with proteins S10 and S14.

Its function is as follows. Binds the lower part of the 30S subunit head. Binds mRNA in the 70S ribosome, positioning it for translation. The chain is Small ribosomal subunit protein uS3 from Photorhabdus laumondii subsp. laumondii (strain DSM 15139 / CIP 105565 / TT01) (Photorhabdus luminescens subsp. laumondii).